Consider the following 270-residue polypeptide: Undecaprenyl-diphosphatase 1 (270 aa).

Helical transmembrane passes span 5–25 (YYVL…PIPI), 42–62 (IEGF…VLLI), 89–109 (FFFI…GVLF), 117–137 (LKGV…LWII), 192–212 (FSFL…ITDI), 220–240 (TLFV…YISL), and 250–270 (GNLK…LIFL).

It belongs to the UppP family.

It localises to the cell membrane. It carries out the reaction di-trans,octa-cis-undecaprenyl diphosphate + H2O = di-trans,octa-cis-undecaprenyl phosphate + phosphate + H(+). Its function is as follows. Catalyzes the dephosphorylation of undecaprenyl diphosphate (UPP). Confers resistance to bacitracin. In Bacillus cereus (strain ATCC 14579 / DSM 31 / CCUG 7414 / JCM 2152 / NBRC 15305 / NCIMB 9373 / NCTC 2599 / NRRL B-3711), this protein is Undecaprenyl-diphosphatase 1.